Consider the following 238-residue polypeptide: Ribonuclease PH (238 aa).

Phosphate-binding positions include R86 and 124-126; that span reads GTR.

Belongs to the RNase PH family. Homohexameric ring arranged as a trimer of dimers.

The enzyme catalyses tRNA(n+1) + phosphate = tRNA(n) + a ribonucleoside 5'-diphosphate. In terms of biological role, phosphorolytic 3'-5' exoribonuclease that plays an important role in tRNA 3'-end maturation. Removes nucleotide residues following the 3'-CCA terminus of tRNAs; can also add nucleotides to the ends of RNA molecules by using nucleoside diphosphates as substrates, but this may not be physiologically important. Probably plays a role in initiation of 16S rRNA degradation (leading to ribosome degradation) during starvation. This Erwinia tasmaniensis (strain DSM 17950 / CFBP 7177 / CIP 109463 / NCPPB 4357 / Et1/99) protein is Ribonuclease PH.